The sequence spans 86 residues: Small ribosomal subunit protein bS20 (86 aa).

Belongs to the bacterial ribosomal protein bS20 family.

Binds directly to 16S ribosomal RNA. The sequence is that of Small ribosomal subunit protein bS20 from Mycolicibacterium gilvum (strain PYR-GCK) (Mycobacterium gilvum (strain PYR-GCK)).